We begin with the raw amino-acid sequence, 88 residues long: MWHNVGLTLLVFVATLLIVLLLMVCGWYFVWHLFLSKFKFLRELVGDTGSQEGDNEQPSGSEAEEDPSASPHKMRSARQRRPPVDDGH.

The chain crosses the membrane as a helical span at residues 10–30 (LVFVATLLIVLLLMVCGWYFV). A compositionally biased stretch (polar residues) spans 48 to 60 (TGSQEGDNEQPSG). The interval 48 to 88 (TGSQEGDNEQPSGSEAEEDPSASPHKMRSARQRRPPVDDGH) is disordered. Residues Ser-59, Ser-61, and Ser-70 each carry the phosphoserine modification. The segment covering 72–81 (HKMRSARQRR) has biased composition (basic residues).

This sequence belongs to the SMIM13 family.

The protein resides in the membrane. This chain is Small integral membrane protein 13 (Smim13), found in Rattus norvegicus (Rat).